Reading from the N-terminus, the 136-residue chain is Protein NrdI (136 aa).

The protein belongs to the NrdI family.

Probably involved in ribonucleotide reductase function. This chain is Protein NrdI, found in Shigella boydii serotype 4 (strain Sb227).